The sequence spans 165 residues: Lithostathine-1 (165 aa).

Residues Met1 to Gly21 form the signal peptide. Gln22 bears the Pyrrolidone carboxylic acid mark. The C-type lectin domain maps to Ile33 to Phe163. Cystine bridges form between Cys35-Cys46, Cys63-Cys161, and Cys136-Cys153. A glycan (N-linked (GlcNAc...) asparagine) is linked at Asn129.

Expressed only in regenerating islets and normal exocrine pancreas, but not in normal pancreatic islets. Expressed strongly in pancreas, moderately in gall bladder, and weakly in liver.

The protein localises to the secreted. Functionally, might act as an inhibitor of spontaneous calcium carbonate precipitation. This chain is Lithostathine-1 (Reg1), found in Mus musculus (Mouse).